A 1409-amino-acid chain; its full sequence is CRISPR-associated endonuclease Cas9 (1409 aa).

The For RuvC-like nuclease domain role is filled by D31. 3 residues coordinate Mg(2+): D31, E784, and E788. Positions 792–949 (TNQGKSNSQQ…DKAGFIQRQL (158 aa)) constitute an HNH Cas9-type domain. H868 acts as the Proton acceptor for HNH nuclease domain in catalysis. H1011 provides a ligand contact to Mg(2+). Residues 1121 to 1130 (EQNHGLDRGK) show a composition bias toward basic and acidic residues. The disordered stretch occupies residues 1121–1151 (EQNHGLDRGKPKGLFNANLSSKPKPNSNENL). Polar residues predominate over residues 1137 to 1150 (ANLSSKPKPNSNEN).

It belongs to the CRISPR-associated protein Cas9 family. Subtype II-A subfamily. As to quaternary structure, monomer. Binds crRNA and tracrRNA. It depends on Mg(2+) as a cofactor.

Its activity is regulated as follows. Only has nuclease activity when bound to both gRNAs (crRNA plus tracrRNA). In terms of biological role, CRISPR (clustered regularly interspaced short palindromic repeat) is an adaptive immune system that provides protection against mobile genetic elements (viruses, transposable elements and conjugative plasmids). CRISPR clusters contain spacers, sequences complementary to antecedent mobile elements, and target invading nucleic acids. CRISPR clusters are transcribed and processed into CRISPR RNA (crRNA). In type II CRISPR systems correct processing of pre-crRNA requires a trans-encoded small RNA (tracrRNA), endogenous ribonuclease 3 (rnc) and Cas9. The tracrRNA serves as a guide for ribonuclease 3-aided processing of pre-crRNA. Cas9/crRNA/tracrRNA endonucleolytically cleaves linear or circular dsDNA target complementary to the spacer yielding blunt ends; Cas9 is inactive in the absence of the 2 guide RNAs (gRNA). Cas9 recognizes a 3'-G-rich protospacer adjacent motif (PAM, TGGTG in this organism) in the CRISPR repeat sequences to help distinguish self versus nonself, as targets within the bacterial CRISPR locus do not have PAMs. PAM recognition is also required for catalytic activity. When the CRISPR3/cas system consisting of cas9-cas1-cas2-csn2-CRISPR3 or just cas9-CRISPR3 is expressed in E.coli it prevents plasmids homologous to spacers 1 or 2 from transforming. This Streptococcus thermophilus protein is CRISPR-associated endonuclease Cas9.